Reading from the N-terminus, the 453-residue chain is Gamma-aminobutyric acid receptor subunit alpha-6 (453 aa).

The first 19 residues, 1–19 (MLLLLPWLFSLLWIENAQA), serve as a signal peptide directing secretion. The Extracellular portion of the chain corresponds to 20-243 (QLEDEGNFYS…FHLQRKMGYF (224 aa)). N31 is a glycosylation site (N-linked (GlcNAc...) asparagine). R84 contributes to the 4-aminobutanoate binding site. N-linked (GlcNAc...) asparagine glycans are attached at residues N128 and N141. T147 serves as a coordination point for 4-aminobutanoate. C156 and C170 form a disulfide bridge. A helical transmembrane segment spans residues 244–264 (MIQIYTPCIMTVILSQVSFWI). Topologically, residues 265 to 270 (NKESVP) are cytoplasmic. A helical transmembrane segment spans residues 271–290 (ARTVFGITTVLTMTTLSISA). At 291–304 (RHSLPKVSYATAMD) the chain is on the extracellular side. The chain crosses the membrane as a helical span at residues 305-325 (WFIAVCFAFVFSALIEFAAVN). Residues 326–422 (YFTNLQSQKA…GTSKIDQYSR (97 aa)) lie on the Cytoplasmic side of the membrane. Phosphoserine is present on S375. A Phosphothreonine modification is found at T403. The helical transmembrane segment at 423–443 (ILFPVAFAGFNLVYWIVYLSK) threads the bilayer. Over 444 to 453 (DTMEVSSTVE) the chain is Extracellular.

This sequence belongs to the ligand-gated ion channel (TC 1.A.9) family. Gamma-aminobutyric acid receptor (TC 1.A.9.5) subfamily. GABRA6 sub-subfamily. Heteropentamer, formed by a combination of alpha (GABRA1-6), beta (GABRB1-3), gamma (GABRG1-3), delta (GABRD), epsilon (GABRE), rho (GABRR1-3), pi (GABRP) and theta (GABRQ) chains, each subunit exhibiting distinct physiological and pharmacological properties. Binds UBQLN1. In terms of tissue distribution, expressed in brain, in cerebellar granule cells.

The protein resides in the postsynaptic cell membrane. The protein localises to the cell membrane. It carries out the reaction chloride(in) = chloride(out). Its function is as follows. Alpha subunit of the heteropentameric ligand-gated chloride channel gated by gamma-aminobutyric acid (GABA), a major inhibitory neurotransmitter in the brain. GABA-gated chloride channels, also named GABA(A) receptors (GABAAR), consist of five subunits arranged around a central pore and contain GABA active binding site(s) located at the alpha and beta subunit interface(s). When activated by GABA, GABAARs selectively allow the flow of chloride anions across the cell membrane down their electrochemical gradient. Alpha-6/GABRA6 subunits are found at both synaptic and extrasynaptic sites. Chloride influx into the postsynaptic neuron following GABAAR opening decreases the neuron ability to generate a new action potential, thereby reducing nerve transmission. Extrasynaptic alpha-6-containing receptors contribute to the tonic GABAergic inhibition. Alpha-6 subunits are also present on glutamatergic synapses. This Rattus norvegicus (Rat) protein is Gamma-aminobutyric acid receptor subunit alpha-6.